A 146-amino-acid polypeptide reads, in one-letter code: Ecotin-like protein 1 (146 aa).

Belongs to the protease inhibitor I11 (ecotin) family.

This Leishmania braziliensis protein is Ecotin-like protein 1 (ISP1).